The sequence spans 128 residues: Iron-sulfur cluster insertion protein ErpA 1 (128 aa).

3 residues coordinate iron-sulfur cluster: Cys47, Cys111, and Cys113.

It belongs to the HesB/IscA family. In terms of assembly, homodimer. Iron-sulfur cluster serves as cofactor.

Its function is as follows. Required for insertion of 4Fe-4S clusters for at least IspG. In Methylococcus capsulatus (strain ATCC 33009 / NCIMB 11132 / Bath), this protein is Iron-sulfur cluster insertion protein ErpA 1.